We begin with the raw amino-acid sequence, 287 residues long: Pyridoxal kinase PdxY (287 aa).

Substrate is bound by residues Ser9 and 44-45 (MQ). The ATP site is built by Asp111, Ala142, Glu147, and Lys180. Residue Asp221 participates in substrate binding.

Belongs to the pyridoxine kinase family. PdxY subfamily. As to quaternary structure, homodimer. The cofactor is Mg(2+).

The enzyme catalyses pyridoxal + ATP = pyridoxal 5'-phosphate + ADP + H(+). The protein operates within cofactor metabolism; pyridoxal 5'-phosphate salvage; pyridoxal 5'-phosphate from pyridoxal: step 1/1. Pyridoxal kinase involved in the salvage pathway of pyridoxal 5'-phosphate (PLP). Catalyzes the phosphorylation of pyridoxal to PLP. This Burkholderia mallei (strain ATCC 23344) protein is Pyridoxal kinase PdxY.